A 267-amino-acid chain; its full sequence is MEMO1 family protein aq_890 (267 aa).

It belongs to the MEMO1 family.

This chain is MEMO1 family protein aq_890, found in Aquifex aeolicus (strain VF5).